The chain runs to 490 residues: Glycine--tRNA ligase (490 aa).

Substrate is bound by residues arginine 99 and glutamate 163. Residues 195–197 (RNE), 205–210 (FRTREF), 282–283 (EL), and 326–329 (GLTR) contribute to the ATP site. Residue 210–214 (FEQME) coordinates substrate. Substrate is bound at residue 322–326 (EPAAG). Residues 470–490 (PVEMGGEPWPESGVQEAGGLY) are disordered.

It belongs to the class-II aminoacyl-tRNA synthetase family. Homodimer.

It localises to the cytoplasm. The enzyme catalyses tRNA(Gly) + glycine + ATP = glycyl-tRNA(Gly) + AMP + diphosphate. Functionally, catalyzes the attachment of glycine to tRNA(Gly). The polypeptide is Glycine--tRNA ligase (Bifidobacterium longum (strain NCC 2705)).